Here is a 425-residue protein sequence, read N- to C-terminus: Histidine--tRNA ligase (425 aa).

It belongs to the class-II aminoacyl-tRNA synthetase family. Homodimer.

Its subcellular location is the cytoplasm. The catalysed reaction is tRNA(His) + L-histidine + ATP = L-histidyl-tRNA(His) + AMP + diphosphate + H(+). The polypeptide is Histidine--tRNA ligase (Tolumonas auensis (strain DSM 9187 / NBRC 110442 / TA 4)).